Reading from the N-terminus, the 382-residue chain is Fimbrial usher domain-containing protein YdeT (382 aa).

The protein is Fimbrial usher domain-containing protein YdeT (ydeT) of Escherichia coli O157:H7.